Consider the following 432-residue polypeptide: Glutamate-1-semialdehyde 2,1-aminomutase (432 aa).

Lys266 carries the post-translational modification N6-(pyridoxal phosphate)lysine.

This sequence belongs to the class-III pyridoxal-phosphate-dependent aminotransferase family. HemL subfamily. In terms of assembly, homodimer. Pyridoxal 5'-phosphate is required as a cofactor.

The protein localises to the cytoplasm. The catalysed reaction is (S)-4-amino-5-oxopentanoate = 5-aminolevulinate. The protein operates within porphyrin-containing compound metabolism; protoporphyrin-IX biosynthesis; 5-aminolevulinate from L-glutamyl-tRNA(Glu): step 2/2. In Janthinobacterium sp. (strain Marseille) (Minibacterium massiliensis), this protein is Glutamate-1-semialdehyde 2,1-aminomutase.